Here is an 861-residue protein sequence, read N- to C-terminus: E3 ubiquitin-protein ligase HECTD3 (861 aa).

Residue alanine 2 is modified to N-acetylalanine. Serine 12 bears the Phosphoserine mark. The region spanning 219 to 397 (DEDLIHFLYD…ASLVRYPRLE (179 aa)) is the DOC domain. Positions 512–857 (YEKPLDYRWP…NCVAIDTDMS (346 aa)) constitute an HECT domain. Cysteine 823 acts as the Glycyl thioester intermediate in catalysis.

As to quaternary structure, interacts with TRIOBP. Interacts with STX8.

The protein localises to the cytoplasm. It is found in the perinuclear region. It carries out the reaction S-ubiquitinyl-[E2 ubiquitin-conjugating enzyme]-L-cysteine + [acceptor protein]-L-lysine = [E2 ubiquitin-conjugating enzyme]-L-cysteine + N(6)-ubiquitinyl-[acceptor protein]-L-lysine.. The protein operates within protein modification; protein ubiquitination. Functionally, E3 ubiquitin ligases accepts ubiquitin from an E2 ubiquitin-conjugating enzyme in the form of a thioester and then directly transfers the ubiquitin to targeted substrates. Mediates ubiquitination of TRIOBP and its subsequent proteasomal degradation, thus facilitating cell cycle progression by regulating the turn-over of TRIOBP. Also mediates ubiquitination of STX8. The chain is E3 ubiquitin-protein ligase HECTD3 (Hectd3) from Mus musculus (Mouse).